The chain runs to 404 residues: Argininosuccinate synthase (404 aa).

7 to 15 is an ATP binding site; it reads AYSGGLDTS. Positions 85 and 90 each coordinate L-citrulline. G115 contacts ATP. Positions 117, 121, and 122 each coordinate L-aspartate. N121 serves as a coordination point for L-citrulline. R125, S178, S187, E264, and Y276 together coordinate L-citrulline.

The protein belongs to the argininosuccinate synthase family. Type 1 subfamily. As to quaternary structure, homotetramer.

It localises to the cytoplasm. It carries out the reaction L-citrulline + L-aspartate + ATP = 2-(N(omega)-L-arginino)succinate + AMP + diphosphate + H(+). It participates in amino-acid biosynthesis; L-arginine biosynthesis; L-arginine from L-ornithine and carbamoyl phosphate: step 2/3. This Rhodopirellula baltica (strain DSM 10527 / NCIMB 13988 / SH1) protein is Argininosuccinate synthase.